Here is a 341-residue protein sequence, read N- to C-terminus: Cyclic GMP-AMP synthase-like receptor (341 aa).

ATP is bound by residues serine 64 and 77 to 79 (EFD). 3 residues coordinate Mg(2+): glutamate 77, aspartate 79, and aspartate 172. Aspartate 172 provides a ligand contact to GTP. ATP-binding positions include lysine 230 and 246–250 (SYHIK). Position 258 (glutamate 258) interacts with Mn(2+).

The protein belongs to the mab-21 family. The cofactor is Mg(2+). Mn(2+) is required as a cofactor.

It carries out the reaction GTP + ATP = 2',3'-cGAMP + 2 diphosphate. It catalyses the reaction GTP + ATP = pppGp(2'-5')A + diphosphate. The catalysed reaction is pppGp(2'-5')A = 2',3'-cGAMP + diphosphate. Its function is as follows. Nucleotidyltransferase that catalyzes the formation of cyclic GMP-AMP (2',3'-cGAMP) from ATP and GTP and plays a key role in innate immunity. Acts as a key sensor of double-stranded RNA (dsRNA), the presence of dsRNA in the cytoplasm being a danger signal that triggers the immune responses. Directly binds dsRNA, activating the nucleotidyltransferase activity, leading to synthesis of 2',3'-cGAMP, a second messenger that binds to and activates Sting, thereby triggering the immune response via activation of the NF-kappa-B transcription factor. The protein is Cyclic GMP-AMP synthase-like receptor of Hydra vulgaris (Hydra).